Here is a 326-residue protein sequence, read N- to C-terminus: Malate dehydrogenase (326 aa).

11-17 serves as a coordination point for NAD(+); the sequence is GAAGQIG. Residues R92 and R98 each contribute to the substrate site. NAD(+)-binding positions include N105, Q112, and 129–131; that span reads VGN. Residues N131 and R162 each contribute to the substrate site. The Proton acceptor role is filled by H187.

The protein belongs to the LDH/MDH superfamily. MDH type 2 family.

It carries out the reaction (S)-malate + NAD(+) = oxaloacetate + NADH + H(+). Its function is as follows. Catalyzes the reversible oxidation of malate to oxaloacetate. The protein is Malate dehydrogenase of Leptospira interrogans serogroup Icterohaemorrhagiae serovar Lai (strain 56601).